A 160-amino-acid chain; its full sequence is Cytochrome b6-f complex subunit 4 (160 aa).

The next 3 membrane-spanning stretches (helical) occupy residues 36–56, 95–115, and 131–151; these read LLYI…GLAV, LLGV…PFLE, and TIFL…ALPI.

The protein belongs to the cytochrome b family. PetD subfamily. In terms of assembly, the 4 large subunits of the cytochrome b6-f complex are cytochrome b6, subunit IV (17 kDa polypeptide, petD), cytochrome f and the Rieske protein, while the 4 small subunits are petG, petL, petM and petN. The complex functions as a dimer.

The protein resides in the plastid. Its subcellular location is the chloroplast thylakoid membrane. Component of the cytochrome b6-f complex, which mediates electron transfer between photosystem II (PSII) and photosystem I (PSI), cyclic electron flow around PSI, and state transitions. The sequence is that of Cytochrome b6-f complex subunit 4 from Anthoceros angustus (Hornwort).